Consider the following 573-residue polypeptide: NADH-ubiquinone oxidoreductase chain 5 (573 aa).

Transmembrane regions (helical) follow at residues 4 to 24 (ISFI…LYYL), 44 to 64 (IVMT…VLMI), 85 to 105 (FIML…SPNL), 106 to 126 (VSIL…VIYF), 147 to 167 (VALL…YIFY), 170 to 190 (VMQN…AAMT), 212 to 234 (SALV…FNIV), 239 to 259 (WLGQ…GLGA), 268 to 288 (IIAL…SMGF), 294 to 314 (FHLL…GAII), 337 to 357 (SACF…AGFY), 377 to 396 (FLYF…LVYY), 422 to 442 (LGLL…IFPF), 452 to 472 (LKML…LISI), 487 to 507 (LTLF…GMIF), and 552 to 572 (LKIY…FLLF).

This sequence belongs to the complex I subunit 5 family.

It localises to the mitochondrion inner membrane. It catalyses the reaction a ubiquinone + NADH + 5 H(+)(in) = a ubiquinol + NAD(+) + 4 H(+)(out). Functionally, core subunit of the mitochondrial membrane respiratory chain NADH dehydrogenase (Complex I) that is believed to belong to the minimal assembly required for catalysis. Complex I functions in the transfer of electrons from NADH to the respiratory chain. The immediate electron acceptor for the enzyme is believed to be ubiquinone. This Drosophila yakuba (Fruit fly) protein is NADH-ubiquinone oxidoreductase chain 5 (mt:ND5).